The following is a 514-amino-acid chain: MAMAAAAAVASQGLLATSSQQQKKSSAKLICNAATFFSGKRLLWVKSCNNGAVGLRASGVRCEAQAIEREAVKADAGNSREEDAFSGLKQVCAVLGTQWGDEGKGKLVDILAQRFDVVARCQGGANAGHTIYNDKGEKFALHLVPSGILNEKTTCVVGNGVVIHLPGFFKEIDNLESKGVNTNGRLLVSDRAHLLFNLHQEVDGLREAELAGQMIGTTKRGIGPCYASKAIRNGIRVSDLRHLDTFREKLDILYRDAAARFKDFEYSSDEVNAEMEKYVKYAERLEPYIVDTVDYVNAAIAEGKRILIEGGQATMLDIDFGTYPFVTSSNPSVGGICTGLGVAPNRLGDIVGVAKAYTSRVGSGPYPTELFGEEGDELRKAGFEWGTTTGRPRRCGWLDIVALNFVCTINGFTAINLTKLDVLSGLPEVKLGIAYKTPSGEKLRAFPADLSILEQVEVEYEILEGWKEDITKVRSYDELPAAAQRYVERIEELIGLPCQYIGVGPGRDALIVKQ.

The N-terminal 56 residues, 1–56 (MAMAAAAAVASQGLLATSSQQQKKSSAKLICNAATFFSGKRLLWVKSCNNGAVGLR), are a transit peptide targeting the chloroplast. GTP contacts are provided by residues 100 to 106 (GDEGKGK) and 128 to 130 (GHT). D101 acts as the Proton acceptor in catalysis. The Mg(2+) site is built by D101 and G128. IMP is bound by residues 101–104 (DEGK), 126–129 (NAGH), T218, R232, Q312, T327, and R391. Residue H129 is the Proton donor of the active site. 387–393 (TTTGRPR) lines the substrate pocket. Residues R393, 419–421 (KLD), and 502–504 (GVG) contribute to the GTP site.

Belongs to the adenylosuccinate synthetase family. As to quaternary structure, homodimer. The cofactor is Mg(2+).

The protein localises to the plastid. It localises to the chloroplast. It catalyses the reaction IMP + L-aspartate + GTP = N(6)-(1,2-dicarboxyethyl)-AMP + GDP + phosphate + 2 H(+). It participates in purine metabolism; AMP biosynthesis via de novo pathway; AMP from IMP: step 1/2. Its function is as follows. Plays an important role in the de novo pathway and in the salvage pathway of purine nucleotide biosynthesis. Catalyzes the first committed step in the biosynthesis of AMP from IMP. This chain is Adenylosuccinate synthetase 2, chloroplastic, found in Physcomitrium patens (Spreading-leaved earth moss).